A 517-amino-acid polypeptide reads, in one-letter code: Ribosome assembly protein 4 (517 aa).

The tract at residues M1–D25 is disordered. The segment at L34–A128 is ubiquitin-like (UBL) domain. 8 WD repeats span residues G144–T184, G187–Q226, G230–S277, G278–N316, E351–V397, G402–N441, G444–D483, and G486–N517.

The protein belongs to the NLE1/RSA4 family. Associates with the pre-60S ribosomal particle. Interacts (via WD repeats) with uL18. Interacts (via UBL domain) with MDN1 (via VWFA/MIDAS domain). Interacts (via WD repeats) with NSA2.

The protein localises to the nucleus. Its subcellular location is the nucleolus. Functionally, involved in ribosome biogenesis. Required for processing and efficient intra-nuclear transport of pre-60S ribosomal subunits. Interacts with the AAA-ATPase Midasin, which is essential for the ATP-dependent dissociation of a group of nonribosomal factors from the pre-60S particle. The polypeptide is Ribosome assembly protein 4 (Chaetomium thermophilum (strain DSM 1495 / CBS 144.50 / IMI 039719) (Thermochaetoides thermophila)).